A 216-amino-acid polypeptide reads, in one-letter code: Transmembrane emp24 domain-containing protein p24delta5 (216 aa).

Residues 1-27 form the signal peptide; the sequence is MAINRIAHGSLFLTVVLFFLTVNYGEA. At 28 to 183 the chain is on the lumenal side; the sequence is IWLTIPTTGG…REVSETTNSR (156 aa). The region spanning 38 to 151 is the GOLD domain; it reads TKCVSEEIQS…IEGVELQLRR (114 aa). A glycan (N-linked (GlcNAc...) asparagine) is linked at Asn86. The stretch at 137–159 forms a coiled coil; that stretch reads AKKEKIEGVELQLRRLEGLVLSI. Omega-N-methylated arginine occurs at positions 169 and 174. The helical transmembrane segment at 184 to 204 threads the bilayer; sequence VAWFSIMSLGVCVVVVGSQIL. Residues 205–216 are Cytoplasmic-facing; that stretch reads YLKRYFHKKKLI. A COPII vesicle coat-binding motif is present at residues 209–210; the sequence is YF. A COPI vesicle coat-binding motif is present at residues 209 to 216; sequence YFHKKKLI.

It belongs to the EMP24/GP25L family. Probably oligomerizes with other members of the EMP24/GP25L family. Associates with the COPI vesicle coat (coatomer). Associates with the COPII vesicle coat (coatomer). Interacts with p24beta2.

It is found in the endoplasmic reticulum membrane. Involved in vesicular protein trafficking. Mainly functions in the early secretory pathway. Thought to act as cargo receptor at the lumenal side for incorporation of secretory cargo molecules into transport vesicles and to be involved in vesicle coat formation at the cytoplasmic side. Interacts with p24beta2 at endoplasmic reticulum export sites for endoplasmic reticulum exit and coupled transport to the Golgi apparatus. Once in the Golgi, interacts very efficiently with the COPI machinery for retrograde transport back to the endoplasmic reticulum. In Arabidopsis thaliana (Mouse-ear cress), this protein is Transmembrane emp24 domain-containing protein p24delta5.